Here is a 90-residue protein sequence, read N- to C-terminus: uncharacterized protein (90 aa).

The N-terminal stretch at 1-21 is a signal peptide; that stretch reads MFKFSIPLLLFIFLFFSCINS. Residues 56–90 form a disordered region; sequence SNEKLPERILSGSSGSCSSCSISSSNGSSSRSSKQ. Over residues 66-90 the composition is skewed to low complexity; it reads SGSSGSCSSCSISSSNGSSSRSSKQ. Asn81 is a glycosylation site (N-linked (GlcNAc...) asparagine).

This is an uncharacterized protein from Dictyostelium discoideum (Social amoeba).